The chain runs to 74 residues: Large ribosomal subunit protein bL28 (74 aa).

Belongs to the bacterial ribosomal protein bL28 family.

This Desulforapulum autotrophicum (strain ATCC 43914 / DSM 3382 / VKM B-1955 / HRM2) (Desulfobacterium autotrophicum) protein is Large ribosomal subunit protein bL28.